The chain runs to 147 residues: Peptide methionine sulfoxide reductase MsrB 2 (147 aa).

Positions 6–129 constitute a MsrB domain; it reads TDEEVSKLTP…NSAALRFIPR (124 aa). The active-site Nucleophile is Cys-118.

The protein belongs to the MsrB Met sulfoxide reductase family.

It carries out the reaction L-methionyl-[protein] + [thioredoxin]-disulfide + H2O = L-methionyl-(R)-S-oxide-[protein] + [thioredoxin]-dithiol. The chain is Peptide methionine sulfoxide reductase MsrB 2 (msrB2) from Rhizobium meliloti (strain 1021) (Ensifer meliloti).